Here is a 619-residue protein sequence, read N- to C-terminus: MALLQIAEPGQSSAPHQHRIAIGIDLGTTHSLVATVLSGKPKVLNDVQNRRLLPSIVHYGDNTTHYGEEAKPFIIADPKNTIVSVKRFMGRSKADIKFQHPYELVGSENEMPAFETRAGRKTPVEISAEILKQLKDRAEDSLQNPVNGAVITVPAYFDEAQRQATRDAAQLAGLNVLRLLNEPTAAAVAYGLDQESNLATDRNYVIYDLGGGTFDVSILRFSQGVFEVLATGGHTALGGDDLDRLIVKWAKKQLNIDVLSDEDYAVFIVAARQAKEQLSTQDSVELKLLEATLTLDRPTFESIIQVALDKTISVCKRVLRDAKLELTDIQNVVLVGGSTRSYAVQKAVREVFAQEPLCTINPDEVVAIGASITANQLIGNSQDGSLLLDVTPLSLGLETMGGLVERLISRNTAIPVARRQEFTTYQDGQTAMLIHVVQGERDLVEHCRSLGRFVLHGIPPMTAGQARIEVTFQVDADGLLTVSAREATSGVQAHIDIKPSYGLSEADTERLLIEGFQHAEEDKNLRHLKETKVEAERELESLEQALKVDADLLDEKQLDALNSAKESLKAQLEGSDIQAIEHAVQQLKVHSDAFAALRMNRHIDHALKGTKLDDWSKSN.

This sequence belongs to the heat shock protein 70 family.

Chaperone involved in the maturation of iron-sulfur cluster-containing proteins. Has a low intrinsic ATPase activity which is markedly stimulated by HscB. In Acinetobacter baumannii (strain AB0057), this protein is Chaperone protein HscA homolog.